The chain runs to 480 residues: UDP-N-acetylmuramoylalanine--D-glutamate ligase (480 aa).

An ATP-binding site is contributed by Gly-127–Thr-133.

This sequence belongs to the MurCDEF family.

It localises to the cytoplasm. It catalyses the reaction UDP-N-acetyl-alpha-D-muramoyl-L-alanine + D-glutamate + ATP = UDP-N-acetyl-alpha-D-muramoyl-L-alanyl-D-glutamate + ADP + phosphate + H(+). Its pathway is cell wall biogenesis; peptidoglycan biosynthesis. Its function is as follows. Cell wall formation. Catalyzes the addition of glutamate to the nucleotide precursor UDP-N-acetylmuramoyl-L-alanine (UMA). This Tropheryma whipplei (strain Twist) (Whipple's bacillus) protein is UDP-N-acetylmuramoylalanine--D-glutamate ligase.